The sequence spans 101 residues: Small ribosomal subunit protein uS14 (101 aa).

The span at 1–10 (MAKKSSIEKN) shows a compositional bias: basic and acidic residues. The segment at 1 to 24 (MAKKSSIEKNNRRKRLTKNAAPKR) is disordered. The span at 11 to 24 (NRRKRLTKNAAPKR) shows a compositional bias: basic residues.

It belongs to the universal ribosomal protein uS14 family. In terms of assembly, part of the 30S ribosomal subunit. Contacts proteins S3 and S10.

Binds 16S rRNA, required for the assembly of 30S particles and may also be responsible for determining the conformation of the 16S rRNA at the A site. The sequence is that of Small ribosomal subunit protein uS14 from Rhodopseudomonas palustris (strain BisB18).